We begin with the raw amino-acid sequence, 356 residues long: Cell division control protein 10 (356 aa).

The Septin-type G domain maps to 36 to 286 (KGFELNVLVV…NNYRKKIFEI (251 aa)). The segment at 46–53 (GRRGLGTS) is G1 motif. Residues 46-53 (GRRGLGTS) and Thr-70 each bind GTP. Residues 93 to 96 (TYHE) form a G3 motif region. The segment at 163–166 (PKAD) is G4 motif. GTP contacts are provided by residues 164-172 (KADMYTPDE) and Arg-235.

This sequence belongs to the TRAFAC class TrmE-Era-EngA-EngB-Septin-like GTPase superfamily. Septin GTPase family. In terms of assembly, component of the septin complex.

In terms of biological role, septins are GTPases involved in cytokinesis. The septins localize to the site of cleavage and act as a structural scaffold that recruits different components involved in diverse processes at specific stages during the cell cycle. Septins are also involved in cell morphogenesis, chitin deposition, cell cycle regulation, cell compartmentalization and spore wall formation. The chain is Cell division control protein 10 (CDC10) from Encephalitozoon cuniculi (strain GB-M1) (Microsporidian parasite).